The primary structure comprises 220 residues: Glutamine amidotransferase-like class 1 domain-containing protein 1 (220 aa).

The first 35 residues, 1-35, serve as a signal peptide directing secretion; sequence MASERLPSRPACLLVASGAAEGVSAQSFLHCFTLA. Residues Asn-57 and Asn-201 are each glycosylated (N-linked (GlcNAc...) asparagine).

It belongs to the peptidase C56 family. In terms of assembly, homotetramer. Component of the FERRY complex composed of five subunits, TBCK, PPP1R21, FERRY3, CRYZL1 and GATD1 with a ratio of 1:2:1:2:4, respectively.

The protein resides in the secreted. The protein localises to the early endosome. Its function is as follows. Component of the FERRY complex (Five-subunit Endosomal Rab5 and RNA/ribosome intermediary). The FERRY complex directly interacts with mRNAs and RAB5A, and functions as a RAB5A effector involved in the localization and the distribution of specific mRNAs most likely by mediating their endosomal transport. The complex recruits mRNAs and ribosomes to early endosomes through direct mRNA-interaction. The chain is Glutamine amidotransferase-like class 1 domain-containing protein 1 from Bos taurus (Bovine).